A 513-amino-acid chain; its full sequence is ATP synthase subunit alpha (513 aa).

ATP is bound at residue Gly-169–Thr-176.

The protein belongs to the ATPase alpha/beta chains family. F-type ATPases have 2 components, CF(1) - the catalytic core - and CF(0) - the membrane proton channel. CF(1) has five subunits: alpha(3), beta(3), gamma(1), delta(1), epsilon(1). CF(0) has three main subunits: a(1), b(2) and c(9-12). The alpha and beta chains form an alternating ring which encloses part of the gamma chain. CF(1) is attached to CF(0) by a central stalk formed by the gamma and epsilon chains, while a peripheral stalk is formed by the delta and b chains.

Its subcellular location is the cell inner membrane. It catalyses the reaction ATP + H2O + 4 H(+)(in) = ADP + phosphate + 5 H(+)(out). Produces ATP from ADP in the presence of a proton gradient across the membrane. The alpha chain is a regulatory subunit. The sequence is that of ATP synthase subunit alpha from Francisella tularensis subsp. mediasiatica (strain FSC147).